Here is a 1056-residue protein sequence, read N- to C-terminus: MIDLRLEEDILTATLPEFLTTRPKYRYAYTNTKQQDLRLLGPMRHVRLTHLYKHTKLWNLQYIERELTNIEIDDALDEFMQTFSLPYTIEQGTYKYNMLLGMHAHNIGYQDDVSELIANNPQLLNYLNDNPLASIFELIDIDLQIYQYGQNIFNNEVEHMILFLKDNTYHGVIQALQKHPFSATHVTWHLHKHIFVFHSREKLLNKLLATGLEDSQLYQRQKTYSTKRGDRPTERMITYIEDDHIRRIQAVLPLLLDNIFDVKLHRDSSMTWLKSYADTIYDSAKNSDSTVTPEIRKLYLRMYNQYMRVFLPIEQYMLYDTTCWPFSEKITLKINVRLISSRENQPVSWKTPIDTENLISIVQPDNPINKLNFTAVPSTMIRLNDNIMMYRSVKDMFAAIEYIPDSDENIPTIEMKEQALSRYISPDSEAQNFFNNQPPYLNSIINVNKQVFEAVRRGNIQVSTGSAEHLCLCMYVKSGLIVGRTVLIDDKVILRRNFNASTAKMITCYVKAVTQLYGEGSLIYPGLRIVFFGVETEPAMDVLKLFYGDKALYIQGFGDRGIGRDRFRTKIEDALTLRIGCDILISDIDQADYQDPSEEKFDDITEFVCYLTELVISNATIGLVKISMPTYYLLNKISQNINNKFSKVNINIVKLSTQKPYTYEAYLLLSHGSTLTTKGYAKNPVCDVYLEQISLQPQEIKIISTISNEINYDKPTLYRLVVDKNDITDVSIAMHILSIHCSTIITRSVMVKNDNTGAFVTMSGMKDMKRVAIMNRMTDGTNENAYMYEDNGKLYLQKVPYLEDLVNAFPNGFGSTHQNDYDSSTSVINVNALVRQVVYRVISKSIPVALLESLSRIRIVGGRDLGEMNAVYKLYKTPVEVYDTVGITREYPHVQISYRAQRYQFTESIPNHTLLLANYVIMNDIDRAPISSAEQINTIKKIISKIGVGSIAYVQVYTDVVARHINVMTKNDSFLISANADKTVFKVQVSGYKAVEMCNYEQLLQLVSDNTGVHIIKLTYQDVLESCVLSSGILGDTGSWLLDLVLASTYIIEIRG.

Belongs to the orthoreovirus lambda-2 protein family.

Its subcellular location is the virion. It catalyses the reaction a 5'-end diphospho-ribonucleoside in mRNA + GTP + H(+) = a 5'-end (5'-triphosphoguanosine)-ribonucleoside in mRNA + diphosphate. The catalysed reaction is a 5'-end (5'-triphosphoguanosine)-ribonucleoside in mRNA + S-adenosyl-L-methionine = a 5'-end (N(7)-methyl 5'-triphosphoguanosine)-ribonucleoside in mRNA + S-adenosyl-L-homocysteine. Functionally, outer capsid protein involved in mRNA capping. Catalyzes the last 3 enzymatic activities for formation of the 5' cap structure on the viral plus-strand transcripts, namely the RNA guanylyltransferase, RNA-7N- and RNA-2'O-methyltransferase activities. The protein is Outer capsid protein VP5 (S5) of Aedes pseudoscutellaris reovirus (isolate France) (ApRV).